The following is a 247-amino-acid chain: Coproheme decarboxylase (247 aa).

Fe-coproporphyrin III contacts are provided by residues arginine 129, 143 to 147 (YPMDK), histidine 170, glutamine 183, and serine 221. Residue tyrosine 143 is part of the active site.

The protein belongs to the ChdC family. Type 1 subfamily. It depends on Fe-coproporphyrin III as a cofactor.

The enzyme catalyses Fe-coproporphyrin III + 2 H2O2 + 2 H(+) = heme b + 2 CO2 + 4 H2O. It catalyses the reaction Fe-coproporphyrin III + H2O2 + H(+) = harderoheme III + CO2 + 2 H2O. The catalysed reaction is harderoheme III + H2O2 + H(+) = heme b + CO2 + 2 H2O. It participates in porphyrin-containing compound metabolism; protoheme biosynthesis. In terms of biological role, involved in coproporphyrin-dependent heme b biosynthesis. Catalyzes the decarboxylation of Fe-coproporphyrin III (coproheme) to heme b (protoheme IX), the last step of the pathway. The reaction occurs in a stepwise manner with a three-propionate intermediate. The sequence is that of Coproheme decarboxylase from Bacillus cereus (strain AH820).